Consider the following 315-residue polypeptide: Methenyltetrahydromethanopterin cyclohydrolase (315 aa).

Belongs to the MCH family.

The protein localises to the cytoplasm. It catalyses the reaction 5,10-methenyl-5,6,7,8-tetrahydromethanopterin + H2O = N(5)-formyl-5,6,7,8-tetrahydromethanopterin + H(+). The protein operates within one-carbon metabolism; methanogenesis from CO(2); 5,10-methenyl-5,6,7,8-tetrahydromethanopterin from CO(2): step 3/3. In terms of biological role, catalyzes the reversible interconversion of 5-formyl-H(4)MPT to methenyl-H(4)MPT(+). This chain is Methenyltetrahydromethanopterin cyclohydrolase, found in Methanoculleus marisnigri (strain ATCC 35101 / DSM 1498 / JR1).